The sequence spans 1073 residues: Carbamoyl phosphate synthase large chain (1073 aa).

The interval Pro2–Glu403 is carboxyphosphate synthetic domain. The ATP site is built by Arg129, Arg169, Gly175, Gly176, Glu208, Leu210, Glu215, Gly241, Ile242, His243, Gln285, and Glu299. In terms of domain architecture, ATP-grasp 1 spans Asp133–Val328. Positions 285, 299, and 301 each coordinate Mg(2+). Residues Gln285, Glu299, and Asn301 each contribute to the Mn(2+) site. Residues Val404 to Ala553 form an oligomerization domain region. The interval Asn554 to Asn936 is carbamoyl phosphate synthetic domain. One can recognise an ATP-grasp 2 domain in the interval Gln679–Ala870. Residues Arg715, His754, Leu756, Glu761, Gly786, Val787, His788, Ser789, Gln829, and Glu841 each contribute to the ATP site. Positions 829, 841, and 843 each coordinate Mg(2+). 3 residues coordinate Mn(2+): Gln829, Glu841, and Asn843. Positions Ser937 to Lys1073 constitute an MGS-like domain. The segment at Ser937 to Lys1073 is allosteric domain.

The protein belongs to the CarB family. Composed of two chains; the small (or glutamine) chain promotes the hydrolysis of glutamine to ammonia, which is used by the large (or ammonia) chain to synthesize carbamoyl phosphate. Tetramer of heterodimers (alpha,beta)4. It depends on Mg(2+) as a cofactor. The cofactor is Mn(2+).

It catalyses the reaction hydrogencarbonate + L-glutamine + 2 ATP + H2O = carbamoyl phosphate + L-glutamate + 2 ADP + phosphate + 2 H(+). It carries out the reaction hydrogencarbonate + NH4(+) + 2 ATP = carbamoyl phosphate + 2 ADP + phosphate + 2 H(+). Its pathway is amino-acid biosynthesis; L-arginine biosynthesis; carbamoyl phosphate from bicarbonate: step 1/1. It participates in pyrimidine metabolism; UMP biosynthesis via de novo pathway; (S)-dihydroorotate from bicarbonate: step 1/3. Functionally, large subunit of the glutamine-dependent carbamoyl phosphate synthetase (CPSase). CPSase catalyzes the formation of carbamoyl phosphate from the ammonia moiety of glutamine, carbonate, and phosphate donated by ATP, constituting the first step of 2 biosynthetic pathways, one leading to arginine and/or urea and the other to pyrimidine nucleotides. The large subunit (synthetase) binds the substrates ammonia (free or transferred from glutamine from the small subunit), hydrogencarbonate and ATP and carries out an ATP-coupled ligase reaction, activating hydrogencarbonate by forming carboxy phosphate which reacts with ammonia to form carbamoyl phosphate. The chain is Carbamoyl phosphate synthase large chain from Escherichia coli O6:H1 (strain CFT073 / ATCC 700928 / UPEC).